Consider the following 814-residue polypeptide: Exostosin-like-3 homolog (814 aa).

The Cytoplasmic portion of the chain corresponds to 1-14 (MAIKLNGSSRSFVP). A helical; Signal-anchor for type II membrane protein transmembrane segment spans residues 15–35 (SLRVSAFLIFIFFVITYIIIY). N-linked (GlcNAc...) asparagine glycans are attached at residues Asn-36, Asn-227, Asn-297, Asn-322, Asn-454, and Asn-492. At 36-814 (NVSFSEPSWI…QNHQKCFKYV (779 aa)) the chain is on the lumenal side. 7 residues coordinate UDP-N-acetyl-alpha-D-glucosamine: Arg-570, Asn-595, Asn-620, Arg-625, Asp-641, Asp-642, and Asp-643. Residue Asp-643 coordinates Mn(2+). N-linked (GlcNAc...) asparagine glycosylation is present at Asn-685. Cys-726 and Cys-774 are joined by a disulfide. UDP-N-acetyl-alpha-D-glucosamine is bound by residues Glu-727, Asp-728, and Arg-771. Residue Asp-728 is part of the active site.

It belongs to the glycosyltransferase 47 family. In terms of assembly, interacts with rib-1. Mn(2+) is required as a cofactor.

The protein localises to the endoplasmic reticulum membrane. Its subcellular location is the golgi apparatus membrane. It catalyses the reaction 3-O-(beta-D-GlcA-(1-&gt;3)-beta-D-Gal-(1-&gt;3)-beta-D-Gal-(1-&gt;4)-beta-D-Xyl)-L-seryl-[protein] + UDP-N-acetyl-alpha-D-glucosamine = 3-O-(alpha-D-GlcNAc-(1-&gt;4)-beta-D-GlcA-(1-&gt;3)-beta-D-Gal-(1-&gt;3)-beta-D-Gal-(1-&gt;4)-beta-D-Xyl)-L-seryl-[protein] + UDP + H(+). The enzyme catalyses 3-O-{[(1-&gt;4)-beta-D-GlcA-(1-&gt;4)-alpha-D-GlcNAc](n)-(1-&gt;4)-beta-D-GlcA-(1-&gt;3)-beta-D-Gal-(1-&gt;3)-beta-D-Gal-(1-&gt;4)-beta-D-Xyl}-L-seryl-[protein] + UDP-N-acetyl-alpha-D-glucosamine = 3-O-{alpha-D-GlcNAc-[(1-&gt;4)-beta-D-GlcA-(1-&gt;4)-alpha-D-GlcNAc](n)-(1-&gt;4)-beta-D-GlcA-(1-&gt;3)-beta-D-Gal-(1-&gt;3)-beta-D-Gal-(1-&gt;4)-beta-D-Xyl}-L-seryl-[protein] + UDP + H(+). It carries out the reaction 3-O-{alpha-D-GlcNAc-[(1-&gt;4)-beta-D-GlcA-(1-&gt;4)-alpha-D-GlcNAc](n)-(1-&gt;4)-beta-D-GlcA-(1-&gt;3)-beta-D-Gal-(1-&gt;3)-beta-D-Gal-(1-&gt;4)-beta-D-Xyl}-L-seryl-[protein] + UDP-alpha-D-glucuronate = 3-O-{[(1-&gt;4)-beta-D-GlcA-(1-&gt;4)-alpha-D-GlcNAc](n+1)-(1-&gt;4)-beta-D-GlcA-(1-&gt;3)-beta-D-Gal-(1-&gt;3)-beta-D-Gal-(1-&gt;4)-beta-D-Xyl}-L-seryl-[protein] + UDP + H(+). It functions in the pathway glycan metabolism; heparan sulfate biosynthesis. With respect to regulation, binding to rib-1 is required for GlcAT-II activity and for increasing GlcNAc-II activity in vitro. Functionally, glycosyltransferase required for the biosynthesis of heparan sulfate. Initiates heparan sulfate synthesis by transferring GlcNAc to the (GlcA-Gal-Gal-Xyl-)Ser core linker (GlcNAcT-I activity). In association with rib-1, is also responsible for the alternating addition of beta-1-4-linked glucuronic acid (GlcA) and alpha-1-4-linked N-acetylglucosamine (GlcNAc) units to nascent heparan sulfate chains (GlcNAcT-II and GlcAT-II activities). Required for normal ventral epidermal enclosure during the early stages of embryonic development. In addition, involved in the elongation of the pharyngeal isthmus during the later stages of embryonic development. Involved in the directed migration of hermaphrodite-specific neurons. The polypeptide is Exostosin-like-3 homolog (rib-2) (Caenorhabditis elegans).